We begin with the raw amino-acid sequence, 239 residues long: Aspartate/glutamate leucyltransferase (239 aa).

Belongs to the R-transferase family. Bpt subfamily.

It is found in the cytoplasm. It carries out the reaction N-terminal L-glutamyl-[protein] + L-leucyl-tRNA(Leu) = N-terminal L-leucyl-L-glutamyl-[protein] + tRNA(Leu) + H(+). It catalyses the reaction N-terminal L-aspartyl-[protein] + L-leucyl-tRNA(Leu) = N-terminal L-leucyl-L-aspartyl-[protein] + tRNA(Leu) + H(+). In terms of biological role, functions in the N-end rule pathway of protein degradation where it conjugates Leu from its aminoacyl-tRNA to the N-termini of proteins containing an N-terminal aspartate or glutamate. This is Aspartate/glutamate leucyltransferase from Campylobacter jejuni subsp. jejuni serotype O:2 (strain ATCC 700819 / NCTC 11168).